Here is a 172-residue protein sequence, read N- to C-terminus: NADH-ubiquinone oxidoreductase chain 6 (172 aa).

Helical transmembrane passes span 1–21, 26–48, 52–74, 86–106, and 147–167; these read MTNY…GLAL, IYGG…GFGG, GLMV…TAMA, WFIF…FYLF, and CATW…FIII.

The protein belongs to the complex I subunit 6 family. In terms of assembly, core subunit of respiratory chain NADH dehydrogenase (Complex I) which is composed of 45 different subunits.

The protein resides in the mitochondrion inner membrane. It carries out the reaction a ubiquinone + NADH + 5 H(+)(in) = a ubiquinol + NAD(+) + 4 H(+)(out). In terms of biological role, core subunit of the mitochondrial membrane respiratory chain NADH dehydrogenase (Complex I) which catalyzes electron transfer from NADH through the respiratory chain, using ubiquinone as an electron acceptor. Essential for the catalytic activity and assembly of complex I. The chain is NADH-ubiquinone oxidoreductase chain 6 from Rattus norvegicus (Rat).